The chain runs to 95 residues: Co-chaperonin GroES (95 aa).

The protein belongs to the GroES chaperonin family. As to quaternary structure, heptamer of 7 subunits arranged in a ring. Interacts with the chaperonin GroEL.

Its subcellular location is the cytoplasm. Functionally, together with the chaperonin GroEL, plays an essential role in assisting protein folding. The GroEL-GroES system forms a nano-cage that allows encapsulation of the non-native substrate proteins and provides a physical environment optimized to promote and accelerate protein folding. GroES binds to the apical surface of the GroEL ring, thereby capping the opening of the GroEL channel. This chain is Co-chaperonin GroES, found in Vesicomyosocius okutanii subsp. Calyptogena okutanii (strain HA).